We begin with the raw amino-acid sequence, 1161 residues long: MEADWDELSRIPVPAPSSHGLPTIATTIAFDDVSELLWAGNEFGRITSFYGPELQRYTSVRAHPVSDGPVRQILFHERGVISLSPKSVHMITRRGLSQWHIAHEEMTDLHCMSFTAQLNRIIVAGCQSAMFTIDIDKGVIVDKLQTDHNYTMMKKSRYLCAATDTGSVNALSLSDFQVVKSWKAHGTAINDMDARNDLLVTCGFSVRHLGSPIVDPLANVYDLKTLSPLPPIPFHAGAAYVRMHPKLHTTSFVASQTGQLQVVDLMNPNAINLRQANVSFMLGIDISPSGEALAINDAECAIHLWGSPSKVHFNEMSKEVEFADVVPRPPSLDWSPDTPLNMIGMPYYHERLFSAWPSHLVFEVGNPPASIDQSLIPYLRPAEMGHYAPNPKKTRRYQVENTRALTTAESALIAPKFLSEKAREQTRAKSEGSVSDTAEALAGAKLNGEAEDDPLLKYSNVEIKYSRFGVDDFDFRFYNQTIFSGLETHIANSFTNALLQLLKFIPLVRNLALHHAASTCIYETCLLCEMGYLFDMLEKANGQNCQATNLLKAFSSYREASNLGLLEENLTTKSLSSAIQSVNRFFLNQIAHDFRMILPSSDDLDHRLATIASESIRCMFCQNEIVRPGNSLANELIYPAIDIKQARRNPAFKFSNILRASIERETQNRGWCNYCRRYQQVTIRKTVHRMPLVLILNAALNNPLCRRLWSIPGWLPEEIGIVVEGGQVMCYEGDELKAQVQNKVPNLVLYDLVGLVAEIDIPEHQKAHLVSFINVSISSRETESKSRWHLFNDFLVTEVDKDEALRFNQPWKIPCVLAYQARDARHGVDDAWKDTLDTTLLFRDWSLNGGRPVESRQTLTEEEKPTPGTPVALDTEFVDLEKAEIDVKADGSQEIVRPNKSGLARVSVLRGSGIHEGVPFIDDYITIKEPIVDYVTQYSGIKPGDLDPRTSQHNLVPLKVAYKKLWLLLNLGCIFVGHGLASDFRKINIQVPKNQTVDTQYLYFHPGKNRRLSLRYLAWAVFKEYIQEESTDANQGHDSVEDARMALRLWKKFQEYEDAGIVNQILEEIFREGSRLGFRPPPRNGVATVLSRPGTAVTMQNNSGRNTPSTPDVGGAAAAAATTSAPATPRQAFRRSIALTPSNGTFGGPGTGDFFGGSPLK.

WD repeat units lie at residues 20-59 (GLPT…RYTS), 102-145 (AHEE…DKLQ), and 276-315 (ANVS…HFNE). The interval 316-452 (MSKEVEFADV…GAKLNGEAED (137 aa)) is linker. Residues 453–822 (DPLLKYSNVE…IPCVLAYQAR (370 aa)) enclose the USP domain. The Exonuclease domain maps to 871-1049 (VALDTEFVDL…VEDARMALRL (179 aa)). A divalent metal cation-binding residues include D874, E876, D983, and D1042. Residues 1094 to 1161 (GTAVTMQNNS…GDFFGGSPLK (68 aa)) are disordered. Polar residues predominate over residues 1097–1110 (VTMQNNSGRNTPST). Positions 1116–1129 (AAAAAATTSAPATP) are enriched in low complexity. Residues 1145-1155 (TFGGPGTGDFF) are compositionally biased toward gly residues.

The protein belongs to the peptidase C19 family. PAN2 subfamily. Forms a heterotrimer with an asymmetric homodimer of the regulatory subunit pan3 to form the poly(A)-nuclease (PAN) deadenylation complex. A divalent metal cation serves as cofactor.

The protein resides in the cytoplasm. It carries out the reaction Exonucleolytic cleavage of poly(A) to 5'-AMP.. Positively regulated by the regulatory subunit pan3. Catalytic subunit of the poly(A)-nuclease (PAN) deadenylation complex, one of two cytoplasmic mRNA deadenylases involved in mRNA turnover. PAN specifically shortens poly(A) tails of RNA and the activity is stimulated by poly(A)-binding protein pab1. PAN deadenylation is followed by rapid degradation of the shortened mRNA tails by the CCR4-NOT complex. Deadenylated mRNAs are then degraded by two alternative mechanisms, namely exosome-mediated 3'-5' exonucleolytic degradation, or deadenylation-dependent mRNA decaping and subsequent 5'-3' exonucleolytic degradation by xrn1. May also be involved in post-transcriptional maturation of mRNA poly(A) tails. This is PAN2-PAN3 deadenylation complex catalytic subunit pan2 from Aspergillus clavatus (strain ATCC 1007 / CBS 513.65 / DSM 816 / NCTC 3887 / NRRL 1 / QM 1276 / 107).